A 41-amino-acid polypeptide reads, in one-letter code: Photosystem I reaction center subunit IX (41 aa).

A helical transmembrane segment spans residues Y7–I27.

Belongs to the PsaJ family.

The protein resides in the plastid. Its subcellular location is the chloroplast thylakoid membrane. Functionally, may help in the organization of the PsaE and PsaF subunits. This chain is Photosystem I reaction center subunit IX, found in Chara vulgaris (Common stonewort).